Consider the following 218-residue polypeptide: Cell division protein SepF (218 aa).

The segment at D25–Q115 is disordered. The segment covering S29–A43 has biased composition (polar residues). The span at P47–R63 shows a compositional bias: basic and acidic residues. Residues S102–Q115 show a composition bias toward polar residues.

The protein belongs to the SepF family. As to quaternary structure, homodimer. Interacts with FtsZ.

It localises to the cytoplasm. In terms of biological role, cell division protein that is part of the divisome complex and is recruited early to the Z-ring. Probably stimulates Z-ring formation, perhaps through the cross-linking of FtsZ protofilaments. Its function overlaps with FtsA. The protein is Cell division protein SepF of Streptococcus pyogenes serotype M5 (strain Manfredo).